Reading from the N-terminus, the 64-residue chain is U9-ctenitoxin-Pr1a (64 aa).

Cystine bridges form between C3–C15, C9–C24, C14–C47, C34–C55, and C49–C61.

In terms of tissue distribution, expressed by the venom gland.

It is found in the secreted. Non-toxic to mice and insects. This Phoneutria reidyi (Brazilian Amazonian armed spider) protein is U9-ctenitoxin-Pr1a.